The sequence spans 627 residues: Carnitine O-acetyltransferase, mitochondrial (627 aa).

The Proton acceptor role is filled by His-336. Residues Lys-418 and 422 to 429 (KKFKVSPD) contribute to the CoA site. 3 residues coordinate (R)-carnitine: Tyr-451, Ser-453, and Thr-464. A CoA-binding site is contributed by Gln-553. A Microbody targeting signal motif is present at residues 625-627 (PKL).

It belongs to the carnitine/choline acetyltransferase family.

The protein resides in the peroxisome. It is found in the mitochondrion inner membrane. The enzyme catalyses (R)-carnitine + acetyl-CoA = O-acetyl-(R)-carnitine + CoA. Carnitine acetylase is specific for short chain fatty acids. Carnitine acetylase seems to affect the flux through the pyruvate dehydrogenase complex. It may be involved as well in the transport of acetyl-CoA into mitochondria. This is Carnitine O-acetyltransferase, mitochondrial (CAT2) from Candida tropicalis (Yeast).